Here is a 316-residue protein sequence, read N- to C-terminus: Transaldolase 2 (316 aa).

K131 acts as the Schiff-base intermediate with substrate in catalysis.

This sequence belongs to the transaldolase family. Type 1 subfamily. Homodimer.

The protein localises to the cytoplasm. The catalysed reaction is D-sedoheptulose 7-phosphate + D-glyceraldehyde 3-phosphate = D-erythrose 4-phosphate + beta-D-fructose 6-phosphate. Its pathway is carbohydrate degradation; pentose phosphate pathway; D-glyceraldehyde 3-phosphate and beta-D-fructose 6-phosphate from D-ribose 5-phosphate and D-xylulose 5-phosphate (non-oxidative stage): step 2/3. Functionally, transaldolase is important for the balance of metabolites in the pentose-phosphate pathway. The polypeptide is Transaldolase 2 (Shigella sonnei (strain Ss046)).